The chain runs to 60 residues: Large ribosomal subunit protein uL30 (60 aa).

Belongs to the universal ribosomal protein uL30 family. As to quaternary structure, part of the 50S ribosomal subunit.

This is Large ribosomal subunit protein uL30 from Streptococcus suis (strain 98HAH33).